Reading from the N-terminus, the 200-residue chain is Holliday junction resolvase RecU (200 aa).

Residues 1 to 25 (MTIRYPNGKRYNQASQPQKTPIKTH) are disordered. Positions 10 to 25 (RYNQASQPQKTPIKTH) are enriched in polar residues. 4 residues coordinate Mg(2+): T85, D87, E100, and Q119.

The protein belongs to the RecU family. It depends on Mg(2+) as a cofactor.

The protein localises to the cytoplasm. The catalysed reaction is Endonucleolytic cleavage at a junction such as a reciprocal single-stranded crossover between two homologous DNA duplexes (Holliday junction).. Functionally, endonuclease that resolves Holliday junction intermediates in genetic recombination. Cleaves mobile four-strand junctions by introducing symmetrical nicks in paired strands. Promotes annealing of linear ssDNA with homologous dsDNA. Required for DNA repair, homologous recombination and chromosome segregation. The chain is Holliday junction resolvase RecU from Bacillus cereus (strain G9842).